The chain runs to 472 residues: WASH complex subunit 1 (472 aa).

A required for WASH complex assembly region spans residues 1 to 51 (MPQNRSVESQAYSLPLILPDLRREEAIHQITDTLQHLQTVSNDIFSRILQR). Disordered stretches follow at residues 294-411 (DRQD…GGDL) and 429-472 (KVPA…DWES). Residues 301–334 (LPPPPPPPPPPPPPPPPEPSALSPPAPPPPPLSI) show a composition bias toward pro residues. The VCA stretch occupies residues 352 to 472 (QGAPKEVVNP…GDGDEDDWES (121 aa)). Residues 364 to 386 (GRASLLESIRQAGGIGKANLRNV) enclose the WH2 domain. Residues 385-400 (NVKEKKLEKKKMKEQE) show a composition bias toward basic and acidic residues.

The protein belongs to the WASH1 family. Component of the WASH complex.

It localises to the early endosome membrane. The protein resides in the recycling endosome membrane. In terms of biological role, acts as a nucleation-promoting factor at the surface of endosomes, where it recruits and activates the Arp2/3 complex to induce actin polymerization, playing a key role in the fission of tubules that serve as transport intermediates during endosome sorting. The sequence is that of WASH complex subunit 1 from Xenopus laevis (African clawed frog).